We begin with the raw amino-acid sequence, 188 residues long: Ribosome-recycling factor (188 aa).

This sequence belongs to the RRF family.

The protein resides in the cytoplasm. Responsible for the release of ribosomes from messenger RNA at the termination of protein biosynthesis. May increase the efficiency of translation by recycling ribosomes from one round of translation to another. This Anaeromyxobacter dehalogenans (strain 2CP-C) protein is Ribosome-recycling factor.